The following is a 365-amino-acid chain: Chorismate synthase (365 aa).

The tract at residues 41–60 (MQHDLDRRRPGTSRYTTARR) is disordered. NADP(+)-binding residues include Arg48 and Arg54. FMN is bound by residues 125-127 (RSS), 238-239 (NA), Gly278, 293-297 (KPTSS), and Arg319.

The protein belongs to the chorismate synthase family. As to quaternary structure, homotetramer. The cofactor is FMNH2.

It carries out the reaction 5-O-(1-carboxyvinyl)-3-phosphoshikimate = chorismate + phosphate. The protein operates within metabolic intermediate biosynthesis; chorismate biosynthesis; chorismate from D-erythrose 4-phosphate and phosphoenolpyruvate: step 7/7. In terms of biological role, catalyzes the anti-1,4-elimination of the C-3 phosphate and the C-6 proR hydrogen from 5-enolpyruvylshikimate-3-phosphate (EPSP) to yield chorismate, which is the branch point compound that serves as the starting substrate for the three terminal pathways of aromatic amino acid biosynthesis. This reaction introduces a second double bond into the aromatic ring system. This chain is Chorismate synthase, found in Shewanella amazonensis (strain ATCC BAA-1098 / SB2B).